The sequence spans 1280 residues: Dynactin subunit 1 (1280 aa).

The tract at residues 1–26 is disordered; that stretch reads MAQSKRHMYNRTPSGSRMSTEASARP. Residues 11–22 are compositionally biased toward polar residues; that stretch reads RTPSGSRMSTEA. A CAP-Gly domain is found at 48 to 90; sequence GATLFATGKWVGVILDEAKGKNDGTVQGRKYFTCDEGHGIFVR. Residues 99–223 form a disordered region; it reads DGADTTSPET…SKEEEGLRDQ (125 aa). Residues 102-114 are compositionally biased toward polar residues; sequence DTTSPETPDSSAS. Phosphothreonine is present on residues threonine 108, threonine 145, threonine 146, and threonine 147. Residues 129–152 show a composition bias toward basic residues; it reads SKLRGLKPKKAPTARKTTTRRPKP. Residues 161–205 are compositionally biased toward low complexity; that stretch reads AGPSSSLGPSGSASAGELSSSEPSTPAQTPLAAPIIPTPALTSPG. The residue at position 179 (serine 179) is a Phosphoserine; by PLK1. Serine 212 bears the Phosphoserine; by CDK1 mark. A compositionally biased stretch (basic and acidic residues) spans 214 to 223; the sequence is SKEEEGLRDQ. Coiled coils occupy residues 214–513 and 942–1048; these read SKEE…ADYQ and LKLE…EGLR. The segment at 910-1280 is interaction with HPS6; the sequence is EYDAERPPSK…LHQLHGRLIS (371 aa). Residues 1064-1089 form a disordered region; sequence GEEQQRGGTPGQAPGALPGPGPVKDS. The stretch at 1184 to 1213 forms a coiled coil; the sequence is SAQLMEQVAQLKSLSDTIEKLKDEVLKETV.

The protein belongs to the dynactin 150 kDa subunit family. As to quaternary structure, monomer and homodimer. Subunit of dynactin, a multiprotein complex part of a tripartite complex with dynein and a adapter, such as BICDL1, BICD2 or HOOK3. The dynactin complex is built around ACTR1A/ACTB filament and consists of an actin-related filament composed of a shoulder domain, a pointed end and a barbed end. Its length is defined by its flexible shoulder domain. The soulder is composed of 2 DCTN1 subunits, 4 DCTN2 and 2 DCTN3. DCTN1/p150(glued) binds directly to microtubules and to cytoplasmic dynein. The 4 DCNT2 (via N-terminus) bind the ACTR1A filament and act as molecular rulers to determine the length. The pointed end is important for binding dynein-dynactin cargo adapters. Consists of 4 subunits: ACTR10, DCNT4, DCTN5 and DCTN6. The barbed end is composed of a CAPZA1:CAPZB heterodimers, which binds ACTR1A/ACTB filament and dynactin and stabilizes dynactin. Interacts with the C-terminus of MAPRE1, MAPRE2 and MAPRE3. Interacts (via C-terminus) with SNX6. Interacts with CLN3, DYNAP, ECPAS and FBXL5. Interacts with MISP; this interaction regulates its distribution at the cell cortex. Interacts with CEP131. Interacts with CEP126. Interacts with CLIP1. Interacts with dynein intermediate chain and dynein heavy chain. Interacts with PLK1 (via POLO-box domain). Interacts with TBCB. Binds preferentially to tyrosinated microtubules than to detyrosinated microtubules. Interacts with PARD6A. Interacts with HPS6. Interacts with KIF3A. Interacts with BICD2. Interacts with DST (isoform 9). Interacts with DST (isoform 1). Identified in a complex with MREG and RILP. Interacts with BCCIP (isoform 2/alpha). Interacts with DCDC1. Interacts with AKNA. Interacts with DYNC1I2. Interacts with RUFY3 and RUFY4. In terms of processing, ubiquitinated by a SCF complex containing FBXL5, leading to its degradation by the proteasome. Phosphorylation by SLK at Thr-145, Thr-146 and Thr-147 targets DCTN1 to the centrosome. It is uncertain if SLK phosphorylates all three threonines or one or two of them. PLK1-mediated phosphorylation at Ser-179 is essential for its localization in the nuclear envelope and promotes its dissociation from microtubules during early mitosis and positively regulates nuclear envelope breakdown during prophase. Ubiquitous with a high level expression observed in the brain (at protein level).

The protein resides in the cytoplasm. It is found in the cytoskeleton. The protein localises to the microtubule organizing center. Its subcellular location is the centrosome. It localises to the centriole. The protein resides in the spindle. It is found in the nucleus envelope. The protein localises to the cell cortex. In terms of biological role, part of the dynactin complex that activates the molecular motor dynein for ultra-processive transport along microtubules. Plays a key role in dynein-mediated retrograde transport of vesicles and organelles along microtubules by recruiting and tethering dynein to microtubules. Binds to both dynein and microtubules providing a link between specific cargos, microtubules and dynein. Essential for targeting dynein to microtubule plus ends, recruiting dynein to membranous cargos and enhancing dynein processivity (the ability to move along a microtubule for a long distance without falling off the track). Can also act as a brake to slow the dynein motor during motility along the microtubule. Can regulate microtubule stability by promoting microtubule formation, nucleation and polymerization and by inhibiting microtubule catastrophe in neurons. Inhibits microtubule catastrophe by binding both to microtubules and to tubulin, leading to enhanced microtubule stability along the axon. Plays a role in metaphase spindle orientation. Plays a role in centriole cohesion and subdistal appendage organization and function. Its recruitment to the centriole in a KIF3A-dependent manner is essential for the maintenance of centriole cohesion and the formation of subdistal appendage. Also required for microtubule anchoring at the mother centriole. Plays a role in primary cilia formation. The polypeptide is Dynactin subunit 1 (Dctn1) (Rattus norvegicus (Rat)).